A 504-amino-acid polypeptide reads, in one-letter code: Maturase K (504 aa).

It belongs to the intron maturase 2 family. MatK subfamily.

The protein localises to the plastid. The protein resides in the chloroplast. Usually encoded in the trnK tRNA gene intron. Probably assists in splicing its own and other chloroplast group II introns. This is Maturase K from Wollastonia biflora (Beach sunflower).